Here is a 548-residue protein sequence, read N- to C-terminus: Eukaryotic translation initiation factor 3 subunit D (548 aa).

K53 carries the N6-acetyllysine modification. Residue S161 is modified to Phosphoserine. The interval 285-299 (DFDLLTVSETANEPP) is RNA gate. A disordered region spans residues 523 to 548 (PDGTFSSDEDEEEEEEEEEEEEEEET). 2 positions are modified to phosphoserine: S528 and S529. Positions 529 to 548 (SDEDEEEEEEEEEEEEEEET) are enriched in acidic residues.

Belongs to the eIF-3 subunit D family. Component of the eukaryotic translation initiation factor 3 (eIF-3) complex, which is composed of 13 subunits: EIF3A, EIF3B, EIF3C, EIF3D, EIF3E, EIF3F, EIF3G, EIF3H, EIF3I, EIF3J, EIF3K, EIF3L and EIF3M. The eIF-3 complex appears to include 3 stable modules: module A is composed of EIF3A, EIF3B, EIF3G and EIF3I; module B is composed of EIF3F, EIF3H, and EIF3M; and module C is composed of EIF3C, EIF3D, EIF3E, EIF3K and EIF3L. EIF3C of module C binds EIF3B of module A and EIF3H of module B, thereby linking the three modules. EIF3J is a labile subunit that binds to the eIF-3 complex via EIF3B. The eIF-3 complex interacts with RPS6KB1 under conditions of nutrient depletion. Mitogenic stimulation leads to binding and activation of a complex composed of MTOR and RPTOR, leading to phosphorylation and release of RPS6KB1 and binding of EIF4B to eIF-3. As to quaternary structure, (Microbial infection) Interacts with Norwalk virus VPg protein.

Its subcellular location is the cytoplasm. Its function is as follows. mRNA cap-binding component of the eukaryotic translation initiation factor 3 (eIF-3) complex, a complex required for several steps in the initiation of protein synthesis of a specialized repertoire of mRNAs. The eIF-3 complex associates with the 40S ribosome and facilitates the recruitment of eIF-1, eIF-1A, eIF-2:GTP:methionyl-tRNAi and eIF-5 to form the 43S pre-initiation complex (43S PIC). The eIF-3 complex stimulates mRNA recruitment to the 43S PIC and scanning of the mRNA for AUG recognition. The eIF-3 complex is also required for disassembly and recycling of post-termination ribosomal complexes and subsequently prevents premature joining of the 40S and 60S ribosomal subunits prior to initiation. The eIF-3 complex specifically targets and initiates translation of a subset of mRNAs involved in cell proliferation, including cell cycling, differentiation and apoptosis, and uses different modes of RNA stem-loop binding to exert either translational activation or repression. In the eIF-3 complex, EIF3D specifically recognizes and binds the 7-methylguanosine cap of a subset of mRNAs. (Microbial infection) In case of FCV infection, plays a role in the ribosomal termination-reinitiation event leading to the translation of VP2. This Homo sapiens (Human) protein is Eukaryotic translation initiation factor 3 subunit D.